Consider the following 317-residue polypeptide: USG-1 protein homolog (317 aa).

The protein belongs to the aspartate-semialdehyde dehydrogenase family.

The polypeptide is USG-1 protein homolog (usg) (Haemophilus influenzae (strain ATCC 51907 / DSM 11121 / KW20 / Rd)).